Reading from the N-terminus, the 392-residue chain is 2,3-bisphosphoglycerate-independent phosphoglycerate mutase (392 aa).

Belongs to the BPG-independent phosphoglycerate mutase family. A-PGAM subfamily.

The catalysed reaction is (2R)-2-phosphoglycerate = (2R)-3-phosphoglycerate. It functions in the pathway carbohydrate degradation; glycolysis; pyruvate from D-glyceraldehyde 3-phosphate: step 3/5. Functionally, catalyzes the interconversion of 2-phosphoglycerate and 3-phosphoglycerate. The polypeptide is 2,3-bisphosphoglycerate-independent phosphoglycerate mutase (Methanothrix thermoacetophila (strain DSM 6194 / JCM 14653 / NBRC 101360 / PT) (Methanosaeta thermophila)).